The primary structure comprises 65 residues: Large ribosomal subunit protein bL35 (65 aa).

It belongs to the bacterial ribosomal protein bL35 family.

This is Large ribosomal subunit protein bL35 from Agathobacter rectalis (strain ATCC 33656 / DSM 3377 / JCM 17463 / KCTC 5835 / VPI 0990) (Eubacterium rectale).